A 168-amino-acid chain; its full sequence is Profilin-3 (168 aa).

A disordered region spans residues 14–36 (LSLEHSDKPQRRSRAKVKKKKKT). The span at 24 to 36 (RRSRAKVKKKKKT) shows a compositional bias: basic residues.

This sequence belongs to the profilin family. As to quaternary structure, occurs in many kinds of cells as a complex with monomeric actin in a 1:1 ratio. Binding to the poly-proline motif of formins induces formation of oligomers through the N-terminal hydrophobic residues of PRF3. In terms of tissue distribution, expressed in roots, rosette leaves, cauline leaves, stems and flowers.

Its subcellular location is the cytoplasm. It localises to the cytoskeleton. In terms of biological role, binds to actin monomers and regulates the organization of the actin cytoskeleton. Can increase the critical concentration (Cc) of actin assembly in vitro. Acts as a downstream effector of the hydrogen sulfide signaling to regulate the assembly and depolymerization of F-actin. At high concentrations, profilin prevents the polymerization of actin, whereas it enhances it at low concentrations. Binding to the poly-proline motif of formin induces oligomerization of PRF3. PRF3 oligomers inhibit formin-mediated actin assembly to modulate plant immunity triggered by pathogen-associated molecular patterns (PAMPs). This chain is Profilin-3, found in Arabidopsis thaliana (Mouse-ear cress).